The primary structure comprises 119 residues: Ribonuclease P protein component (119 aa).

This sequence belongs to the RnpA family. In terms of assembly, consists of a catalytic RNA component (M1 or rnpB) and a protein subunit.

It catalyses the reaction Endonucleolytic cleavage of RNA, removing 5'-extranucleotides from tRNA precursor.. Functionally, RNaseP catalyzes the removal of the 5'-leader sequence from pre-tRNA to produce the mature 5'-terminus. It can also cleave other RNA substrates such as 4.5S RNA. The protein component plays an auxiliary but essential role in vivo by binding to the 5'-leader sequence and broadening the substrate specificity of the ribozyme. In Mycobacterium avium (strain 104), this protein is Ribonuclease P protein component.